The sequence spans 479 residues: Aspartyl/glutamyl-tRNA(Asn/Gln) amidotransferase subunit B (479 aa).

The protein belongs to the GatB/GatE family. GatB subfamily. Heterotrimer of A, B and C subunits.

The catalysed reaction is L-glutamyl-tRNA(Gln) + L-glutamine + ATP + H2O = L-glutaminyl-tRNA(Gln) + L-glutamate + ADP + phosphate + H(+). The enzyme catalyses L-aspartyl-tRNA(Asn) + L-glutamine + ATP + H2O = L-asparaginyl-tRNA(Asn) + L-glutamate + ADP + phosphate + 2 H(+). Its function is as follows. Allows the formation of correctly charged Asn-tRNA(Asn) or Gln-tRNA(Gln) through the transamidation of misacylated Asp-tRNA(Asn) or Glu-tRNA(Gln) in organisms which lack either or both of asparaginyl-tRNA or glutaminyl-tRNA synthetases. The reaction takes place in the presence of glutamine and ATP through an activated phospho-Asp-tRNA(Asn) or phospho-Glu-tRNA(Gln). This Geobacter sulfurreducens (strain ATCC 51573 / DSM 12127 / PCA) protein is Aspartyl/glutamyl-tRNA(Asn/Gln) amidotransferase subunit B.